We begin with the raw amino-acid sequence, 991 residues long: Translation initiation factor IF-2 (991 aa).

Disordered stretches follow at residues 126–220 (QADH…DVGE) and 325–359 (VKAAGDGDTAPAADDALAGKKKPGKKKKKPDVDEK). Composition is skewed to polar residues over residues 138 to 160 (QTESAVQTESAVQTESAVQTEPA) and 201 to 210 (PAAQTESAVQ). Low complexity predominate over residues 326–340 (KAAGDGDTAPAADDA). Positions 343-353 (GKKKPGKKKKK) are enriched in basic residues. Positions 488–658 (IRPPVVTIMG…LTEAEIRELK (171 aa)) constitute a tr-type G domain. The G1 stretch occupies residues 497 to 504 (GHVDHGKT). 497-504 (GHVDHGKT) contributes to the GTP binding site. The tract at residues 522 to 526 (GITQH) is G2. The interval 544–547 (DTPG) is G3. Residues 544-548 (DTPGH) and 598-601 (NKID) each bind GTP. Residues 598 to 601 (NKID) form a G4 region. A G5 region spans residues 634-636 (SAK).

This sequence belongs to the TRAFAC class translation factor GTPase superfamily. Classic translation factor GTPase family. IF-2 subfamily.

It is found in the cytoplasm. Its function is as follows. One of the essential components for the initiation of protein synthesis. Protects formylmethionyl-tRNA from spontaneous hydrolysis and promotes its binding to the 30S ribosomal subunits. Also involved in the hydrolysis of GTP during the formation of the 70S ribosomal complex. The sequence is that of Translation initiation factor IF-2 from Chlorobium phaeobacteroides (strain DSM 266 / SMG 266 / 2430).